Reading from the N-terminus, the 393-residue chain is S-adenosylmethionine synthase (393 aa).

His16 contacts ATP. Asp18 is a binding site for Mg(2+). Glu44 lines the K(+) pocket. 2 residues coordinate L-methionine: Glu57 and Gln100. A flexible loop region spans residues 100 to 110 (QSNDIAQGVDH). ATP contacts are provided by residues 167 to 169 (DAK), 238 to 239 (RF), Asp247, 253 to 254 (RK), Ala270, and Lys274. Asp247 provides a ligand contact to L-methionine. L-methionine is bound at residue Lys278.

The protein belongs to the AdoMet synthase family. In terms of assembly, homotetramer; dimer of dimers. Mg(2+) is required as a cofactor. Requires K(+) as cofactor.

The protein localises to the cytoplasm. It catalyses the reaction L-methionine + ATP + H2O = S-adenosyl-L-methionine + phosphate + diphosphate. It participates in amino-acid biosynthesis; S-adenosyl-L-methionine biosynthesis; S-adenosyl-L-methionine from L-methionine: step 1/1. Functionally, catalyzes the formation of S-adenosylmethionine (AdoMet) from methionine and ATP. The overall synthetic reaction is composed of two sequential steps, AdoMet formation and the subsequent tripolyphosphate hydrolysis which occurs prior to release of AdoMet from the enzyme. This chain is S-adenosylmethionine synthase, found in Variovorax paradoxus (strain S110).